Here is a 495-residue protein sequence, read N- to C-terminus: Transcription termination/antitermination protein NusA (495 aa).

The 66-residue stretch at 135–200 folds into the S1 motif domain; it reads GQIITGIVKK…RGAQLFLSRS (66 aa). In terms of domain architecture, KH spans 302-370; that stretch reads HHTMDIAVDS…KNLNVSEKVI (69 aa). Tandem repeats lie at residues 364 to 414 and 439 to 489. The 2 X 51 AA approximate repeats stretch occupies residues 364-489; it reads NVSEKVIKTL…LLIMAARNIC (126 aa).

This sequence belongs to the NusA family. In terms of assembly, monomer. Binds directly to the core enzyme of the DNA-dependent RNA polymerase and to nascent RNA.

It localises to the cytoplasm. In terms of biological role, participates in both transcription termination and antitermination. This chain is Transcription termination/antitermination protein NusA, found in Buchnera aphidicola subsp. Schizaphis graminum (strain Sg).